Here is a 482-residue protein sequence, read N- to C-terminus: MTKPENIGIHGIEVYFPSTYVAQEDLEKFDGVSQGKYTLGLGQTNMAFCGDREDIYSLSLNAVNNLMDKFNVDPNSIGRLEVGTETVIDKSKSVKTVLMDLFAKHGNTSIDGIDTINACYGGTSALHNALQWMESSYWDGRNAIVVAGDIAVYEKGPARPTGGAGVVAMLIGPNAPITFESGLRGVHMENVYDFYKPDMDSEYPRVDGKLSISCYFRAIDNCYNRYAKAFEKKYGKSFSLDQVDFALFHSPYNKLVQKSFGRMLYNDFLNNPNDSRYASLEAYKNVKPEDTYFDSVLEKALSAITKNDYATKVAPTTLLAKQLGNTYCGSTYSGLLSLLDEKSNDLVGKRVLTFSYGSGLAASAFSFKVEKPINHIVEKVDLKNRLAKRVRVEPEIFTEKLSLRETRHNLKNYVPSDETTNMFPGSFYLSSVDNAGIRKYDRTYSTSAVLGAFQRRQQISQSTIKSLNLFRATKSVLSILKK.

The active-site Proton donor/acceptor is Glu-85. Cys-119 serves as the catalytic Acyl-thioester intermediate. (3S)-3-hydroxy-3-methylglutaryl-CoA contacts are provided by Cys-119, Thr-161, Ser-211, His-249, Lys-258, Asn-325, and Ser-358. The active-site Proton donor/acceptor is the His-249.

The protein belongs to the thiolase-like superfamily. HMG-CoA synthase family.

The catalysed reaction is acetoacetyl-CoA + acetyl-CoA + H2O = (3S)-3-hydroxy-3-methylglutaryl-CoA + CoA + H(+). The protein operates within metabolic intermediate biosynthesis; (R)-mevalonate biosynthesis; (R)-mevalonate from acetyl-CoA: step 2/3. Condenses acetyl-CoA with acetoacetyl-CoA to form HMG-CoA, which is the substrate for HMG-CoA reductase. The protein is Hydroxymethylglutaryl-CoA synthase A (hgsA) of Dictyostelium discoideum (Social amoeba).